Here is a 521-residue protein sequence, read N- to C-terminus: Cytochrome P450 monooxygenase sdnF (521 aa).

The helical transmembrane segment at 19–39 threads the bilayer; that stretch reads YLGLLLSGTVLYTVYKLIIAI. N-linked (GlcNAc...) asparagine glycosylation is found at Asn-178, Asn-186, Asn-191, Asn-309, and Asn-416. Cys-460 is a binding site for heme.

The protein belongs to the cytochrome P450 family. Requires heme as cofactor.

Its subcellular location is the membrane. The protein operates within antibiotic biosynthesis. Cytochrome P450 monooxygenase; part of the gene cluster that mediates the biosynthesis of sordarin and hypoxysordarin, glycoside antibiotics with a unique tetracyclic diterpene aglycone structure. First, the geranylgeranyl diphosphate synthase sdnC constructs GGDP from farnesyl diphosphate and isopentenyl diphosphate. The diterpene cyclase sdnA then catalyzes the cyclization of GGDP to afford cycloaraneosene. Cycloaraneosene is then hydroxylated four times by the putative cytochrome P450 monooxygenases sdnB, sdnE, sdnF and sdnH to give a hydroxylated cycloaraneosene derivative such as cycloaraneosene-8,9,13,19-tetraol. Although the order of the hydroxylations is unclear, at least C8, C9 and C13 of the cycloaraneosene skeleton are hydroxylated before the sordaricin formation. Dehydration of the 13-hydroxy group of the hydroxylated cycloaraneosene derivative might be catalyzed by an unassigned hypothetical protein such as sdnG and sdnP to construct the cyclopentadiene moiety. The FAD-dependent oxidoreductase sdnN is proposed to catalyze the oxidation at C9 of the hydroxylated cycloaraneosene derivative and also catalyze the Baeyer-Villiger oxidation to give the lactone intermediate. The presumed lactone intermediate would be hydrolyzed to give an acrolein moiety and a carboxylate moiety. Then, [4+2]cycloaddition would occur between the acrolein moiety and the cyclopentadiene moiety to give sordaricin. SdnN might also be involved in the [4+2]cycloaddition after the hypothesized oxidation to accommodate the oxidized product and prompt the [4+2]cycloaddition. GDP-6-deoxy-D-altrose may be biosynthesized from GDP-D-mannose by the putative GDP-mannose-4,6-dehydratase sdnI and the short-chain dehydrogenase sdnK. The glycosyltransferase sdnJ catalyzes the attachment of 6-deoxy-D-altrose onto the 19-hydroxy group of sordaricin to give 4'-O-demethylsordarin. The methyltransferase sdnD would complete the biosynthesis of sordarin. Sordarin can be further modified into hypoxysordarin. The unique acyl chain at the 3'-hydroxy group of hypoxysordarin would be constructed by an iterative type I PKS sdnO and the trans-acting polyketide methyltransferase sdnL. SdnL would be responsible for the introduction of an alpha-methyl group of the polyketide chain. Alternatively, the beta-lactamase-like protein sdnR might be responsible for the cleavage and transfer of the polyketide chain from the PKS sdnO to sordarin. Two putative cytochrome P450 monooxygenases, sdnQ and sdnT, might catalyze the epoxidations of the polyketide chain to complete the biosynthesis of hypoxysordarin. Transcriptional regulators sdnM and sdnS are presumably encoded for the transcriptional regulation of the expression of the sdn gene cluster. This chain is Cytochrome P450 monooxygenase sdnF, found in Sordaria araneosa (Pleurage araneosa).